The sequence spans 1630 residues: Histone transcription regulator 3 homolog (1630 aa).

Residues 8 to 42 form a TPR 1 repeat; sequence NAASEDLDKEKRTLEIRIEEAVQIYQNALSAQKQG. Residues 325 to 347 are disordered; that stretch reads KDIVPPPSDNLPKPQLLKRPIDD. One copy of the TPR 2 repeat lies at 1230–1263; it reads WRALYMLGKACRKCGDMENALVHFEAAAALAPTK.

Belongs to the HIR3 family. In terms of assembly, interacts with hip1 and slm9.

The protein localises to the nucleus. Its function is as follows. Has a role in a nucleosome assembly pathway that is required for the integrity of heterochromatin and proper chromosome segregation. Required for transcriptional silencing in the outer repeat (otr) region of centromeric repeats and the Tf2 long terminal repeat retrotransposons. In Schizosaccharomyces pombe (strain 972 / ATCC 24843) (Fission yeast), this protein is Histone transcription regulator 3 homolog (hip3).